The chain runs to 136 residues: MSEALKILNNIRTLRAQARECTLETLEEMLEKLEVVVNERREEDSQAQAEIEERTRKLQQYREMLIADGIDPNELLNAMAVTKAAATKSKRAARPAKYKYIDENGETKTWTGQGRTPAVIKKAIEEQGKSLDDFLL.

Residues 13 to 67 are a coiled coil; that stretch reads TLRAQARECTLETLEEMLEKLEVVVNERREEDSQAQAEIEERTRKLQQYREMLIA. The DNA-binding element occupies 113-118; it reads QGRTPA.

This sequence belongs to the histone-like protein H-NS family. In terms of assembly, interacts with YmoA in the absence of DNA. Homodimer that oligomerizes on DNA into higher-order complexes that form bridges between disparate regions of DNA compacting it. Interacts with YmoA.

It is found in the cytoplasm. It localises to the nucleoid. Functionally, a DNA-binding protein implicated in transcriptional repression and chromosome organization and compaction. Binds nucleation sites in AT-rich DNA and bridges them, forming higher-order nucleoprotein complexes and condensing the chromosome. As many horizontally transferred genes are AT-rich, it plays a central role in silencing foreign genes. A subset of genes are repressed by H-NS in association with YmoA. Complements a number of hns deficiencies in E.coli; represses the bgl operon, represses hemolysin expression. This Yersinia enterocolitica protein is DNA-binding protein H-NS.